The following is a 349-amino-acid chain: NADP-dependent alcohol dehydrogenase C 1 (349 aa).

7 residues coordinate Zn(2+): Cys-41, His-63, Cys-94, Cys-97, Cys-100, Cys-108, and Cys-159. Lys-210 is covalently cross-linked (Isoglutamyl lysine isopeptide (Lys-Gln) (interchain with Q-Cter in protein Pup)).

This sequence belongs to the zinc-containing alcohol dehydrogenase family. The cofactor is Zn(2+).

It catalyses the reaction a primary alcohol + NADP(+) = an aldehyde + NADPH + H(+). Its function is as follows. Prefers aldehydes over alcohols. The sequence is that of NADP-dependent alcohol dehydrogenase C 1 (adhc1) from Mycolicibacterium smegmatis (strain ATCC 700084 / mc(2)155) (Mycobacterium smegmatis).